A 398-amino-acid chain; its full sequence is Serpin-Z1A (398 aa).

Positions 343 to 367 are RCL; sequence GTEAAASTAIKMVLQQARPPSVMDF.

Belongs to the serpin family.

In terms of biological role, inhibits chymotrypsin and cathepsin G in vitro. This Triticum aestivum (Wheat) protein is Serpin-Z1A (WZCI).